Here is a 312-residue protein sequence, read N- to C-terminus: Malate dehydrogenase (312 aa).

Residues G12–G17 and D36 each bind NAD(+). Residues R87 and R93 each contribute to the substrate site. NAD(+) is bound by residues N100 and L123–N125. N125 contacts substrate. S149 bears the Phosphoserine mark. R156 contacts substrate. H180 serves as the catalytic Proton acceptor.

The protein belongs to the LDH/MDH superfamily. MDH type 3 family.

It catalyses the reaction (S)-malate + NAD(+) = oxaloacetate + NADH + H(+). Functionally, catalyzes the reversible oxidation of malate to oxaloacetate. This is Malate dehydrogenase from Anoxybacillus flavithermus (strain DSM 21510 / WK1).